The following is a 4960-amino-acid chain: Malformin synthetase mlfA (4960 aa).

An adenylation 1 region spans residues 194–564 (ERHATNRPHS…CGRADTQVKL (371 aa)). The region spanning 705–778 (SRLEQEVQLA…EAASLAEVQE (74 aa)) is the Carrier 1 domain. Serine 739 is subject to O-(pantetheine 4'-phosphoryl)serine. Positions 816-1247 (EDVFPCTTMQ…ALNTLSLLQA (432 aa)) are condensation 1. The interval 1275–1650 (DRWVTRQPEG…GRKDTQVKLR (376 aa)) is adenylation 2. The region spanning 1777-1854 (TPASELERTL…HLAAEVGEPA (78 aa)) is the Carrier 2 domain. 2 disordered regions span residues 1855-1883 (GQSA…NDGV) and 1917-1943 (GGSS…KKNA). Composition is skewed to low complexity over residues 1857–1881 (SASS…STND) and 1919–1936 (SSSN…SSSS). Positions 1989–2404 (EDIYPATALQ…AVSCSDKETL (416 aa)) are condensation 2. The adenylation 3 stretch occupies residues 2427–2819 (RRTPHAPAVC…IGRRDGQLKL (393 aa)). One can recognise a Carrier 3 domain in the interval 2955 to 3031 (RPVTSQEREM…QLICHINTIR (77 aa)). O-(pantetheine 4'-phosphoryl)serine is present on serine 2992. Condensation regions lie at residues 3049–3464 (VALA…FTFP) and 3520–3889 (SGYV…EQLV). Residues 3914 to 4304 (HNSRQAVCAW…VGRKDNQIKF (391 aa)) are adenylation 4. One can recognise a Carrier 4 domain in the interval 4438 to 4514 (MPSTAAERKM…DLSDQAKSLI (77 aa)). The residue at position 4475 (serine 4475) is an O-(pantetheine 4'-phosphoryl)serine. The condensation 5 stretch occupies residues 4551 to 4878 (DVLPTTSFQH…LQTIVQHQNN (328 aa)).

This sequence belongs to the NRP synthetase family.

Its pathway is secondary metabolite biosynthesis. In terms of biological role, nonribosomal peptide synthetase; part of the gene cluster that mediates the biosynthesis of malformins, cyclic pentapeptides with a disulfide bond between 2 consecutive cysteins, that show potential anti-tumor as well as antimalarial and antitrypanosomal properties. The nonribosomal peptide synthetase mlfA is responsible of the formation of the cyclic pentapeptide. The malformin biosynthesis clusters in malformin-producing fungi also contain enzymes involved in the formation of the disulfide bond between the two consecutive cysteins within malformins, in addition to additional tailoring enzymes such as methyltransferases or oxidoreductases. They are also composed of up to 4 major facilitator superfamily transporters, and transcription factors probably involved in the regulation of the expression of those clusters. This chain is Malformin synthetase mlfA, found in Aspergillus neoniger (strain CBS 115656).